The chain runs to 524 residues: MSTLRDNWRVIFLVAAILLSTFALFSPTMGNQSPIGEDDSATNLQFGLQLDGGTRIRAPLVGVTAEDVEFEGDSERVVERQVAAQIAGADAADIIVRTGAESSTVEATIENVTADDLSAALDAAGYAHGEVRDGVTGTTRAETVRVLQSKINEAGLSGGTVQQVTTATGEHFILVEVPNRDQSDVVDLVGERGTVQIDIYYPTGTDNGSRTYETREAVLTQADFTSIGTAQESQTGSGAFVPVSVRDDPAAEFQTAIQDTGLAQPGGTRCTYMEDGGRNTTEGCLLLVVNGEVVNAFGMSGGLADTMRAGEWAGAPSFQLQTRNTSEAQEIAINLRAGALPARLDLSGEDSGTSSYISPSQGESFKFDSLITGIVAVLAVAGVVFIRYGKPQVALPMIVTGLSEVYILLGFAAAIGYPLDLSVIAGFIAVIGTGVDDLIIIADEVMGEGSVKSRKVFQSRFRRAFWVIGAAAATTIIAMSPLAVLSLGDLQGFAIFTILGVIVGVLVTRPAYGDILRLLLTEDR.

A run of 6 helical transmembrane segments spans residues Val10–Gly30, Lys366–Ile386, Gly389–Leu409, Asp420–Ala442, Phe465–Leu485, and Leu487–Val507.

It belongs to the SecD/SecF family. SecD subfamily. As to quaternary structure, part of the protein translocation apparatus. Forms a homodimer and complexes with SecF.

It is found in the cell membrane. In terms of biological role, involved in protein export. This Haloferax volcanii (strain ATCC 29605 / DSM 3757 / JCM 8879 / NBRC 14742 / NCIMB 2012 / VKM B-1768 / DS2) (Halobacterium volcanii) protein is Protein-export membrane protein SecD.